A 142-amino-acid chain; its full sequence is Interleukin-3 (142 aa).

The first 18 residues, 1–18, serve as a signal peptide directing secretion; sequence MSHLPILLLLLLVSPGLQ. Asn33, Asn88, and Asn108 each carry an N-linked (GlcNAc...) asparagine glycan. The cysteines at positions 34 and 102 are disulfide-linked.

Belongs to the IL-3 family. In terms of assembly, monomer. In terms of tissue distribution, activated T-cells, mast cells, natural killer cells.

The protein localises to the secreted. Its function is as follows. Granulocyte/macrophage colony-stimulating factors are cytokines that act in hematopoiesis by controlling the production, differentiation, and function of 2 related white cell populations of the blood, the granulocytes and the monocytes-macrophages. Functionally, this CSF induces granulocytes, macrophages, mast cells, stem cells, erythroid cells, eosinophils and megakaryocytes. The polypeptide is Interleukin-3 (IL3) (Saguinus oedipus (Cotton-top tamarin)).